The following is a 165-amino-acid chain: Chorismate pyruvate-lyase (165 aa).

Substrate-binding residues include methionine 35, arginine 77, leucine 115, and glutamate 156.

Belongs to the UbiC family. As to quaternary structure, monomer.

The protein localises to the cytoplasm. It catalyses the reaction chorismate = 4-hydroxybenzoate + pyruvate. Its pathway is cofactor biosynthesis; ubiquinone biosynthesis. Functionally, removes the pyruvyl group from chorismate, with concomitant aromatization of the ring, to provide 4-hydroxybenzoate (4HB) for the ubiquinone pathway. The sequence is that of Chorismate pyruvate-lyase from Escherichia coli O7:K1 (strain IAI39 / ExPEC).